The following is a 341-amino-acid chain: Phosphate acyltransferase (341 aa).

It belongs to the PlsX family. In terms of assembly, homodimer. Probably interacts with PlsY.

Its subcellular location is the cytoplasm. It catalyses the reaction a fatty acyl-[ACP] + phosphate = an acyl phosphate + holo-[ACP]. It participates in lipid metabolism; phospholipid metabolism. Its function is as follows. Catalyzes the reversible formation of acyl-phosphate (acyl-PO(4)) from acyl-[acyl-carrier-protein] (acyl-ACP). This enzyme utilizes acyl-ACP as fatty acyl donor, but not acyl-CoA. This chain is Phosphate acyltransferase, found in Vibrio atlanticus (strain LGP32) (Vibrio splendidus (strain Mel32)).